Consider the following 138-residue polypeptide: Phospholipase A2 homolog mojave toxin acidic chain (138 aa).

An N-terminal signal peptide occupies residues 1–40; sequence MRALWIVAVLLVGVEGSLVEFETLIMKIAGRSGISYYSSY. Cystine bridges form between Cys42-Cys131, Cys44-Cys60, Cys59-Cys111, Cys65-Cys138, Cys66-Cys104, Cys73-Cys97, and Cys91-Cys102. A propeptide spanning residues 81–83 is cleaved from the precursor; that stretch reads TYR. The residue at position 84 (Gln84) is a Pyrrolidone carboxylic acid. Positions 120–126 are excised as a propeptide; it reads DYKYLRF.

Belongs to the phospholipase A2 family. Group II subfamily. D49 sub-subfamily. Heterodimer of an acidic and a basic chain. The acidic subunit is non-toxic, without enzymatic activity and comprises 3 peptides that are cross-linked by 5 disulfide bridges. The basic subunit is toxic, has phospholipase A2 activity and is composed of a single chain. Ca(2+) serves as cofactor. As to expression, expressed by the venom gland.

Its subcellular location is the secreted. Functionally, snake venom phospholipase A2 (PLA2) that inhibits neuromuscular transmission by blocking acetylcholine release from the nerve termini. This Crotalus scutulatus scutulatus (Mojave rattlesnake) protein is Phospholipase A2 homolog mojave toxin acidic chain.